The primary structure comprises 255 residues: Diphthine synthase (255 aa).

Residues Leu9, Asp85, Val88, 113 to 114, Leu164, Ala207, and His232 contribute to the S-adenosyl-L-methionine site; that span reads SI.

The protein belongs to the diphthine synthase family. In terms of assembly, homodimer.

It carries out the reaction 2-[(3S)-amino-3-carboxypropyl]-L-histidyl-[translation elongation factor 2] + 3 S-adenosyl-L-methionine = diphthine-[translation elongation factor 2] + 3 S-adenosyl-L-homocysteine + 3 H(+). It functions in the pathway protein modification; peptidyl-diphthamide biosynthesis. Functionally, S-adenosyl-L-methionine-dependent methyltransferase that catalyzes the trimethylation of the amino group of the modified target histidine residue in translation elongation factor 2 (EF-2), to form an intermediate called diphthine. The three successive methylation reactions represent the second step of diphthamide biosynthesis. In Methanococcus maripaludis (strain C7 / ATCC BAA-1331), this protein is Diphthine synthase.